A 692-amino-acid polypeptide reads, in one-letter code: Elongation factor G (692 aa).

The tr-type G domain occupies 8–282; the sequence is ERTRNIGIMA…AIVDYLPAPT (275 aa). GTP contacts are provided by residues 17-24, 81-85, and 135-138; these read AHIDAGKT, DTPGH, and NKMD.

It belongs to the TRAFAC class translation factor GTPase superfamily. Classic translation factor GTPase family. EF-G/EF-2 subfamily.

It localises to the cytoplasm. In terms of biological role, catalyzes the GTP-dependent ribosomal translocation step during translation elongation. During this step, the ribosome changes from the pre-translocational (PRE) to the post-translocational (POST) state as the newly formed A-site-bound peptidyl-tRNA and P-site-bound deacylated tRNA move to the P and E sites, respectively. Catalyzes the coordinated movement of the two tRNA molecules, the mRNA and conformational changes in the ribosome. The polypeptide is Elongation factor G (Desulforamulus reducens (strain ATCC BAA-1160 / DSM 100696 / MI-1) (Desulfotomaculum reducens)).